Here is a 159-residue protein sequence, read N- to C-terminus: uncharacterized protein (159 aa).

This is an uncharacterized protein from Homo sapiens (Human).